A 198-amino-acid polypeptide reads, in one-letter code: Protein GrpE (198 aa).

A compositionally biased stretch (basic and acidic residues) spans Met-1–Lys-14. Residues Met-1 to Glu-20 are disordered.

It belongs to the GrpE family. In terms of assembly, homodimer.

It localises to the cytoplasm. Functionally, participates actively in the response to hyperosmotic and heat shock by preventing the aggregation of stress-denatured proteins, in association with DnaK and GrpE. It is the nucleotide exchange factor for DnaK and may function as a thermosensor. Unfolded proteins bind initially to DnaJ; upon interaction with the DnaJ-bound protein, DnaK hydrolyzes its bound ATP, resulting in the formation of a stable complex. GrpE releases ADP from DnaK; ATP binding to DnaK triggers the release of the substrate protein, thus completing the reaction cycle. Several rounds of ATP-dependent interactions between DnaJ, DnaK and GrpE are required for fully efficient folding. This Vibrio vulnificus (strain YJ016) protein is Protein GrpE.